We begin with the raw amino-acid sequence, 1035 residues long: Ephrin type-A receptor 6 (1035 aa).

The first 22 residues, 1–22 (MGGCEVREFLLQFGFFLPLLTA), serve as a signal peptide directing secretion. At 23 to 549 (WTGDCSHVSN…MAAEQGQILV (527 aa)) the chain is on the extracellular side. In terms of domain architecture, Eph LBD spans 33–211 (QVVLLDTSTV…FYKKCPFTVR (179 aa)). 2 consecutive Fibronectin type-III domains span residues 330-440 (PPSA…TDQD) and 441-536 (APSL…TGDE). N342, N396, and N409 each carry an N-linked (GlcNAc...) asparagine glycan. The helical transmembrane segment at 550–570 (IATAAVGGFTLLVILTLFFLI) threads the bilayer. The Cytoplasmic segment spans residues 571 to 1035 (TGRCQWYIKA…MHIQEKGFHV (465 aa)). Phosphotyrosine; by autocatalysis is present on residues Y605 and Y611. Positions 630–943 (IRIERVIGAG…RNPSALHTLV (314 aa)) constitute a Protein kinase domain. Residues 636–644 (IGAGEFGEV) and K662 contribute to the ATP site. The Proton acceptor role is filled by D797. A phosphotyrosine; by autocatalysis mark is found at Y830 and Y977. One can recognise an SAM domain in the interval 960–1024 (PLFVTVGDWL…VSSIQTLRLH (65 aa)). The PDZ-binding signature appears at 1033–1035 (FHV).

This sequence belongs to the protein kinase superfamily. Tyr protein kinase family. Ephrin receptor subfamily. Heterotetramer upon binding of the ligand. The heterotetramer is composed of an ephrin dimer and a receptor dimer. Oligomerization is probably required to induce biological responses. Interacts (via SAM domain) with ANKS1A (via SAM domain). In terms of tissue distribution, brain.

Its subcellular location is the membrane. The enzyme catalyses L-tyrosyl-[protein] + ATP = O-phospho-L-tyrosyl-[protein] + ADP + H(+). Functionally, receptor tyrosine kinase which binds promiscuously GPI-anchored ephrin-A family ligands residing on adjacent cells, leading to contact-dependent bidirectional signaling into neighboring cells. The signaling pathway downstream of the receptor is referred to as forward signaling while the signaling pathway downstream of the ephrin ligand is referred to as reverse signaling. This Rattus norvegicus (Rat) protein is Ephrin type-A receptor 6 (Epha6).